The primary structure comprises 106 residues: Large ribosomal subunit protein bL21 (106 aa).

This sequence belongs to the bacterial ribosomal protein bL21 family. Part of the 50S ribosomal subunit. Contacts protein L20.

This protein binds to 23S rRNA in the presence of protein L20. This chain is Large ribosomal subunit protein bL21, found in Dichelobacter nodosus (strain VCS1703A).